A 551-amino-acid polypeptide reads, in one-letter code: Colicin E3 (551 aa).

3 disordered regions span residues 1–74, 243–269, and 293–320; these read MSGG…SGGG, TLSPGVTNNTDKDVRPAGFTQGGNTRD, and PDQVKQRQDEENRRQQEWDATHPVEAAE. Positions 1–315 are translocation (T) domain; the sequence is MSGGDGRGHN…RQQEWDATHP (315 aa). Gly residues predominate over residues 20–35; that stretch reads INGGPTGLGVGGGASD. Residues 35–39 carry the Binds to TolB motif; sequence DGSGW. Positions 36-45 are enriched in low complexity; the sequence is GSGWSSENNP. Residues 46-74 show a composition bias toward gly residues; sequence WGGGSGSGIHWGGGSGHGNGGGNGNSGGG. The segment covering 296–320 has biased composition (basic and acidic residues); sequence VKQRQDEENRRQQEWDATHPVEAAE. Residues 316 to 378 are a coiled coil; the sequence is VEAAERNYER…IAEIKQFNRF (63 aa). The segment at 316-450 is receptor-binding (R) domain; the sequence is VEAAERNYER…SAENNLNDEK (135 aa). The Hairpin signature appears at 379–385; it reads AHDPMAG. Residues 386–450 adopt a coiled-coil conformation; the sequence is GHRMWQMAGL…SAENNLNDEK (65 aa). Residues 406-505 form a disordered region; that stretch reads NKQAAFDAAA…KRWTGDKGRK (100 aa). Residues 430–472 are compositionally biased toward basic and acidic residues; sequence ESRKKKEDKKRSAENNLNDEKNKPRKGFKDYGHDYHPAPKTEN. Positions 451-456 are linker; the sequence is NKPRKG. Residues 455–551 are ribosome inactivating activity; it reads KGFKDYGHDY…DPKRNIKKYL (97 aa). The interval 457–551 is cytotoxic RNase (C) domain; that stretch reads FKDYGHDYHP…DPKRNIKKYL (95 aa). Catalysis depends on histidine 513, which acts as the Proton donor. Glutamate 517 functions as the Proton acceptor in the catalytic mechanism. Residues 517–551 are disordered; it reads EGYRASDGQHLGSFDPKTGNQLKGPDPKRNIKKYL. The tract at residues 530-551 is binding of immunity protein; it reads FDPKTGNQLKGPDPKRNIKKYL. Arginine 545 is an active-site residue.

Belongs to the cloacin colicin family. As to quaternary structure, native colicin E3 is a 1:1 complex of A chain and protein B (cognate immunity protein, Im3); protein A is 1,000-fold more active in inactivating ribosomes than the native complex. The cytotoxic fragment (residues 456-551, C95) forms a 1:1 complex with Im3. The receptor-binding (R) domain binds obliquely to its receptor BtuB without displacing BtuB's central plug; binding unfolds the R domain. The N-terminal 83 residues (T83) bind OmpF; trimeric complexes with colicin E3, BtuB and OmpF can be cross-linked and immunoprecipitated. Probably inserts into the OmpF pore as an unfolded peptide and spans the OmpF pore. In a complex with T.thermophilus 70S ribosomes, cytotoxic fragment C96 contacts 16S rRNA, 23S rRNA, mRNA, P-site tRNA and ribosomal protein uS12.

It is found in the secreted. In terms of biological role, colicins are polypeptide toxins produced by and active against E.coli and closely related bacteria. Cleaves 16S rRNA between adenosine-1492 and guanosine-1493 (E.coli 16S rRNA numbering), releasing a 49 nucleotide (nt) 'colicin' fragment. Inactivates 70S ribosomes or 30S subunits by endonucleolytically cleaving 16S RNA at a specific site about 50 nt from its C-terminus. Produces 5'-OH-guanosine and a 2',3'-cyclic phosphate adenosine. Mixing a susceptible (e.g. strain K12 / A19) and colicin E3 producing strain results in total protein translation inhibition within 11 minutes. Its activity is inhibited by cognate immunity protein Im3. Uses BtuB, the vitamin B transporter, as a receptor on the outer membrane; binds via the receptor (R) domain. Then the translocation domain (T) probably 'fishes' for its outer membrane translocon protein, OmpF. The N-terminal 83 residues (T83) can bind to and occlude OmpF channels. A complex of the cytotoxic C-terminal 96 residues (C96) plus the immunity protein does not occlude OmpF; upon complex separation from the immunity protein C96 becomes disordered and is able to bind OmpF. The N-terminus probably binds TolB and then reinserts into an empty pore of trimeric OmpF; the rest of the protein is pulled through OmpF and crosses the inner membrane, where the cytotoxic fragment is probably released by protease FtsH. This is Colicin E3 (ceaC) from Escherichia coli.